A 747-amino-acid chain; its full sequence is ESX-1 secretion system protein EccCa1 (747 aa).

A run of 3 helical transmembrane segments spans residues 41 to 61 (ILPY…VAGG), 65 to 85 (LSPY…GGLA), and 222 to 242 (FPTI…TAMI). The FtsK domain maps to 456 to 665 (GNVMYLDIKE…LRTTSSHESK (210 aa)). Position 479 to 486 (479 to 486 (GTTGSGKS)) interacts with ATP.

Part of the ESX-1 / type VII secretion system (T7SS), which is composed of cytosolic and membrane components. The ESX-1 membrane complex is composed of EccB1, EccCa1, EccCb1, EccD1 and EccE1.

The protein resides in the cell inner membrane. In terms of biological role, part of the ESX-1 specialized secretion system, which delivers several virulence factors to host cells during infection, including the key virulence factors EsxA (ESAT-6) and EsxB (CFP-10). The protein is ESX-1 secretion system protein EccCa1 of Mycobacterium tuberculosis (strain CDC 1551 / Oshkosh).